Consider the following 451-residue polypeptide: tRNA-2-methylthio-N(6)-dimethylallyladenosine synthase (451 aa).

The 117-residue stretch at 11–127 folds into the MTTase N-terminal domain; the sequence is RHYHITTFGC…LEDLLQQVFD (117 aa). Residues cysteine 20, cysteine 56, cysteine 90, cysteine 162, cysteine 166, and cysteine 169 each coordinate [4Fe-4S] cluster. One can recognise a Radical SAM core domain in the interval 148 to 385; sequence RDSTITAWVN…NHLVAQKAAE (238 aa). The region spanning 388–451 is the TRAM domain; the sequence is QRYLGRIEEV…RAFSLTGEIV (64 aa).

The protein belongs to the methylthiotransferase family. MiaB subfamily. In terms of assembly, monomer. Requires [4Fe-4S] cluster as cofactor.

It is found in the cytoplasm. It catalyses the reaction N(6)-dimethylallyladenosine(37) in tRNA + (sulfur carrier)-SH + AH2 + 2 S-adenosyl-L-methionine = 2-methylsulfanyl-N(6)-dimethylallyladenosine(37) in tRNA + (sulfur carrier)-H + 5'-deoxyadenosine + L-methionine + A + S-adenosyl-L-homocysteine + 2 H(+). Catalyzes the methylthiolation of N6-(dimethylallyl)adenosine (i(6)A), leading to the formation of 2-methylthio-N6-(dimethylallyl)adenosine (ms(2)i(6)A) at position 37 in tRNAs that read codons beginning with uridine. In Rippkaea orientalis (strain PCC 8801 / RF-1) (Cyanothece sp. (strain PCC 8801)), this protein is tRNA-2-methylthio-N(6)-dimethylallyladenosine synthase.